Here is a 328-residue protein sequence, read N- to C-terminus: MVKLAIDMMGGDNAPDIVLEAVQKAVEDFKDLEIILFGDEKKYNLNHERIEFRHCSEKIEMEDEPVRAIKRKKDSSMVKMAEAVKSGEADGCVSAGNTGALMSAGLFIVGRIKGVARPALVVTLPTIDGKGFVFLDVGANADAKPEHLLQYAQLGDIYAQKIRGIDNPKISLLNIGTEPAKGNSLTKKSYELLNQDHSLNFVGNIEAKTLMDGDTDVVVTDGYTGNMVLKNLEGTAKSIGKMLKDTIMSSTKNKLAGAILKKDLAEFAKKMDYSEYGGSVLLGLEGTVVKAHGSSNAKAFYSAIRQAKIAGEQNIVQTMKETVGESNE.

The protein belongs to the PlsX family. Homodimer. Probably interacts with PlsY.

The protein localises to the cytoplasm. It catalyses the reaction a fatty acyl-[ACP] + phosphate = an acyl phosphate + holo-[ACP]. It participates in lipid metabolism; phospholipid metabolism. Functionally, catalyzes the reversible formation of acyl-phosphate (acyl-PO(4)) from acyl-[acyl-carrier-protein] (acyl-ACP). This enzyme utilizes acyl-ACP as fatty acyl donor, but not acyl-CoA. The polypeptide is Phosphate acyltransferase (Staphylococcus aureus (strain MSSA476)).